Here is a 324-residue protein sequence, read N- to C-terminus: Probable pectinesterase A (324 aa).

The signal sequence occupies residues 1-19 (MHGSLLKLALLSFSLASSA). Q142 contacts substrate. The active-site Proton donor is D165. D186 serves as the catalytic Nucleophile. Substrate contacts are provided by R246 and W248. A glycan (N-linked (GlcNAc...) asparagine) is linked at N285.

Belongs to the pectinesterase family.

It is found in the secreted. The enzyme catalyses [(1-&gt;4)-alpha-D-galacturonosyl methyl ester](n) + n H2O = [(1-&gt;4)-alpha-D-galacturonosyl](n) + n methanol + n H(+). It participates in glycan metabolism; pectin degradation; 2-dehydro-3-deoxy-D-gluconate from pectin: step 1/5. Involved in maceration and soft-rotting of plant tissue. The chain is Probable pectinesterase A (pmeA) from Aspergillus flavus (strain ATCC 200026 / FGSC A1120 / IAM 13836 / NRRL 3357 / JCM 12722 / SRRC 167).